Consider the following 531-residue polypeptide: Unconventional prefoldin RPB5 interactor (531 aa).

M1 is subject to N-acetylmethionine. 4 disordered regions span residues 1–24, 224–381, 408–470, and 500–531; these read MEPP…APLR, ELES…ELPA, KSRS…SGVS, and TIPE…QQRS. Low complexity predominate over residues 13–24; the sequence is PLAEASAAAPLR. 2 stretches are compositionally biased toward polar residues: residues 257–266 and 280–296; these read SPVTDSSAAS and GQVN…NSYH. The segment covering 300-319 has biased composition (acidic residues); the sequence is DDDEEEEDDDDDDDEDDDNE. A Phosphoserine; by RPS6KB1 modification is found at S369. Residues 414–424 show a composition bias toward polar residues; sequence NSVCSDTSESS. Phosphoserine is present on S439.

Belongs to the RNA polymerase II subunit 5-mediating protein family. Homodimer. Component of the PAQosome complex which is responsible for the biogenesis of several protein complexes and which consists of R2TP complex members RUVBL1, RUVBL2, RPAP3 and PIH1D1, URI complex members PFDN2, PFDN6, PDRG1, UXT and URI1 as well as ASDURF, POLR2E and DNAAF10/WDR92. Interacts with POLR2E/RPB5, RUVBL2 and RUVBL1. Interacts with PFDN2, PFDN4 and STAP1; the interactions are phosphorylation-dependent and occur in a growth-dependent manner in the mitochondrion. Interacts with UXT. Interacts with PPP1CC; the interaction is phosphorylation-dependent and occurs in a growth factor-dependent manner. Interacts (via the middle C-terminal region) with GTF2F1 and GTF2F2. Interacts with DMAP1. Interacts with TSC1 and TSC2. Interacts with PRPF8 and EFTUD2 in a ZNHIT2-dependent manner. Phosphorylation occurs in response to androgen treatment in prostate cancer cells in a mTOR-dependent manner. Phosphorylated; hyperhosphorylated in mitochondria in a mTORC-dependent signaling pathway. Phosphorylated at Ser-369 by RPS6KB1 in a growth factor- and rapamycin-dependent manner. S6K1-mediated mitochondrial phosphorylation at Ser-369 disrupts the URI1-PPP1CC complex in the mitochondrion, relieves PPP1CC phosphatase inhibition activity and hence engages a negative feedback diminishing RPS6KB1 kinase activity, preventing sustained S6K1-dependent signaling. Phosphorylated. Phosphorylation occurs essentially on serine residues. In terms of tissue distribution, expressed in the spinal cord, ganglia, choroid plexus and olfactors epithelium of the developing brain. Expressed in skin, lung, kidney, testis and muscles (at protein level). Expressed strongly in brain and kidney. Expressed weakly in skeletal muscle, lung and liver.

It localises to the nucleus. The protein localises to the cytoplasm. The protein resides in the mitochondrion. Its subcellular location is the cell projection. It is found in the dendrite. Its function is as follows. Involved in gene transcription regulation. Acts as a transcriptional repressor in concert with the corepressor UXT to regulate androgen receptor (AR) transcription. May act as a tumor suppressor to repress AR-mediated gene transcription and to inhibit anchorage-independent growth in prostate cancer cells. Required for cell survival in ovarian cancer cells. Together with UXT, associates with chromatin to the NKX3-1 promoter region. Functionally, plays a central role in maintaining S6K1 signaling and BAD phosphorylation under normal growth conditions thereby protecting cells from potential deleterious effects of sustained S6K1 signaling. The URI1-PPP1CC complex acts as a central component of a negative feedback mechanism that counteracts excessive S6K1 survival signaling to BAD in response to growth factors. Mediates inhibition of PPP1CC phosphatase activity in mitochondria. Coordinates the regulation of nutrient-sensitive gene expression availability in a mTOR-dependent manner. Seems to be a scaffolding protein able to assemble a prefoldin-like complex that contains PFDs and proteins with roles in transcription and ubiquitination. The chain is Unconventional prefoldin RPB5 interactor (Uri1) from Mus musculus (Mouse).